A 207-amino-acid chain; its full sequence is ATP synthase subunit b (207 aa).

A signal peptide spans 1–27 (MKLRATFVFKTTLVALSFALFALFLVS). C28 carries the N-palmitoyl cysteine lipid modification. A lipid anchor (S-diacylglycerol cysteine) is attached at C28. A helical transmembrane segment spans residues 49–69 (WVFLAHLLAFVILLFLLLFLF).

It belongs to the ATPase B chain family. In terms of assembly, F-type ATPases have 2 components, F(1) - the catalytic core - and F(0) - the membrane proton channel. F(1) has five subunits: alpha(3), beta(3), gamma(1), delta(1), epsilon(1). F(0) has three main subunits: a(1), b(2) and c(10-14). The alpha and beta chains form an alternating ring which encloses part of the gamma chain. F(1) is attached to F(0) by a central stalk formed by the gamma and epsilon chains, while a peripheral stalk is formed by the delta and b chains.

The protein localises to the cell membrane. F(1)F(0) ATP synthase produces ATP from ADP in the presence of a proton or sodium gradient. F-type ATPases consist of two structural domains, F(1) containing the extramembraneous catalytic core and F(0) containing the membrane proton channel, linked together by a central stalk and a peripheral stalk. During catalysis, ATP synthesis in the catalytic domain of F(1) is coupled via a rotary mechanism of the central stalk subunits to proton translocation. Functionally, component of the F(0) channel, it forms part of the peripheral stalk, linking F(1) to F(0). The chain is ATP synthase subunit b from Mycoplasma pneumoniae (strain ATCC 29342 / M129 / Subtype 1) (Mycoplasmoides pneumoniae).